The primary structure comprises 284 residues: Shikimate dehydrogenase (NADP(+)) (284 aa).

Shikimate is bound by residues 19 to 21 (SFS) and Thr66. Lys70 (proton acceptor) is an active-site residue. Residue Asp82 coordinates NADP(+). Residues Asn91 and Asp106 each coordinate shikimate. Residues 130–134 (GSGGS) and Ile226 contribute to the NADP(+) site. Residue Tyr228 participates in shikimate binding. Gly249 is an NADP(+) binding site.

It belongs to the shikimate dehydrogenase family. Homodimer.

It carries out the reaction shikimate + NADP(+) = 3-dehydroshikimate + NADPH + H(+). It functions in the pathway metabolic intermediate biosynthesis; chorismate biosynthesis; chorismate from D-erythrose 4-phosphate and phosphoenolpyruvate: step 4/7. In terms of biological role, involved in the biosynthesis of the chorismate, which leads to the biosynthesis of aromatic amino acids. Catalyzes the reversible NADPH linked reduction of 3-dehydroshikimate (DHSA) to yield shikimate (SA). In Methanococcus vannielii (strain ATCC 35089 / DSM 1224 / JCM 13029 / OCM 148 / SB), this protein is Shikimate dehydrogenase (NADP(+)).